A 197-amino-acid polypeptide reads, in one-letter code: 3-isopropylmalate dehydratase small subunit (197 aa).

Belongs to the LeuD family. LeuD type 1 subfamily. As to quaternary structure, heterodimer of LeuC and LeuD.

The enzyme catalyses (2R,3S)-3-isopropylmalate = (2S)-2-isopropylmalate. It participates in amino-acid biosynthesis; L-leucine biosynthesis; L-leucine from 3-methyl-2-oxobutanoate: step 2/4. Catalyzes the isomerization between 2-isopropylmalate and 3-isopropylmalate, via the formation of 2-isopropylmaleate. The polypeptide is 3-isopropylmalate dehydratase small subunit (Shouchella clausii (strain KSM-K16) (Alkalihalobacillus clausii)).